A 248-amino-acid chain; its full sequence is GTP cyclohydrolase 1 type 2 homolog (248 aa).

5 residues coordinate a divalent metal cation: His64, His65, Asp101, His216, and Glu220.

It belongs to the GTP cyclohydrolase I type 2/NIF3 family. As to quaternary structure, homohexamer.

This chain is GTP cyclohydrolase 1 type 2 homolog, found in Borreliella burgdorferi (strain ATCC 35210 / DSM 4680 / CIP 102532 / B31) (Borrelia burgdorferi).